A 351-amino-acid chain; its full sequence is Ferrochelatase (351 aa).

Residues histidine 184 and glutamate 265 each contribute to the Fe cation site.

The protein belongs to the ferrochelatase family.

The protein localises to the cytoplasm. The enzyme catalyses heme b + 2 H(+) = protoporphyrin IX + Fe(2+). The protein operates within porphyrin-containing compound metabolism; protoheme biosynthesis; protoheme from protoporphyrin-IX: step 1/1. Functionally, catalyzes the ferrous insertion into protoporphyrin IX. This is Ferrochelatase from Rhodopirellula baltica (strain DSM 10527 / NCIMB 13988 / SH1).